The following is a 317-amino-acid chain: Pinoresinol reductase 2 (317 aa).

The NADP(+) site is built by T18, S20, L21, R41, K50, S90, G91, R95, N98, and S121. (-)-pinoresinol is bound at residue M125. NADP(+)-binding residues include K144 and F166. The active-site Proton acceptor is K144. G178 is a (-)-pinoresinol binding site.

It belongs to the NmrA-type oxidoreductase family. Isoflavone reductase subfamily. Forms homodimers. In terms of tissue distribution, expressed in roots. Detected in stems.

The enzyme catalyses (-)-lariciresinol + NADP(+) = (-)-pinoresinol + NADPH + H(+). In terms of biological role, reductase involved in lignan biosynthesis. Unlike conventional pinoresinol reductases that can reduce both pinoresinol and lariciresinol, PRR2 shows a strict substrate selectivity for (-)-pinoresinol. No activity with (+)-pinoresinol or lariciresinol. Abstracts the 4R-hydride from the NADPH cofactor during catalysis. This Arabidopsis thaliana (Mouse-ear cress) protein is Pinoresinol reductase 2.